A 342-amino-acid chain; its full sequence is N-acetyl-gamma-glutamyl-phosphate reductase (342 aa).

The active site involves C149.

The protein belongs to the NAGSA dehydrogenase family. Type 1 subfamily.

It is found in the cytoplasm. The enzyme catalyses N-acetyl-L-glutamate 5-semialdehyde + phosphate + NADP(+) = N-acetyl-L-glutamyl 5-phosphate + NADPH + H(+). It participates in amino-acid biosynthesis; L-arginine biosynthesis; N(2)-acetyl-L-ornithine from L-glutamate: step 3/4. Catalyzes the NADPH-dependent reduction of N-acetyl-5-glutamyl phosphate to yield N-acetyl-L-glutamate 5-semialdehyde. This chain is N-acetyl-gamma-glutamyl-phosphate reductase, found in Cereibacter sphaeroides (strain KD131 / KCTC 12085) (Rhodobacter sphaeroides).